A 178-amino-acid polypeptide reads, in one-letter code: Large ribosomal subunit protein uL6 (178 aa).

Belongs to the universal ribosomal protein uL6 family. As to quaternary structure, part of the 50S ribosomal subunit.

Its function is as follows. This protein binds to the 23S rRNA, and is important in its secondary structure. It is located near the subunit interface in the base of the L7/L12 stalk, and near the tRNA binding site of the peptidyltransferase center. The polypeptide is Large ribosomal subunit protein uL6 (Lactiplantibacillus plantarum (strain ATCC BAA-793 / NCIMB 8826 / WCFS1) (Lactobacillus plantarum)).